A 247-amino-acid chain; its full sequence is Particulate methane monooxygenase beta subunit (247 aa).

6 helical membrane-spanning segments follow: residues 23-43 (WMAL…HAML), 59-79 (LWVT…QSYL), 86-106 (PWGA…NRYF), 111-131 (WTYF…AIIL), 145-165 (AIVG…PIIA), and 215-235 (VSAF…HFIG).

In terms of assembly, m.capsulatus has two forms of methane monooxygenase, a soluble (sMMO) and a membrane-bound (particulate) type (pMMO). The particulate type is a nonamer composed of three alpha:beta:gamma heterotrimeric protomers assembled into a cylindrical structure; the beta and gamma subunits comprise the bulk of the membrane-spanning regions and the soluble regions are derived primarily from alpha subunits which form two antiparallel beta-barrel-like structures each. This assembly, also called pMMO hydroxylase (pMMO-H), is proposed to associate with methanol dehydrogenase (MDH), also designated as pMMO-R, to form the pMMO-C complex which seems to have greater methane monooxygenase activity.

It is found in the membrane. The catalysed reaction is methane + a quinol + O2 = methanol + a quinone + H2O. Non-catalytic subunit of the methane monooxygenase that is responsible for the initial oxygenation of methane to methanol in methanotrophs. At least in vitro, specific quinols can replace NADH as reductants. In Methylococcus capsulatus (strain ATCC 33009 / NCIMB 11132 / Bath), this protein is Particulate methane monooxygenase beta subunit (pmoA1).